The chain runs to 61 residues: Photosystem II reaction center protein K (61 aa).

Residues 1–24 (MLNIFSLICICLNSVLYSSSFFVA) constitute a propeptide that is removed on maturation. The helical transmembrane segment at 40–60 (MPVIPVLFFLLAFVWQAAVSF) threads the bilayer.

Belongs to the PsbK family. PSII is composed of 1 copy each of membrane proteins PsbA, PsbB, PsbC, PsbD, PsbE, PsbF, PsbH, PsbI, PsbJ, PsbK, PsbL, PsbM, PsbT, PsbX, PsbY, PsbZ, Psb30/Ycf12, at least 3 peripheral proteins of the oxygen-evolving complex and a large number of cofactors. It forms dimeric complexes.

Its subcellular location is the plastid. It is found in the chloroplast thylakoid membrane. Functionally, one of the components of the core complex of photosystem II (PSII). PSII is a light-driven water:plastoquinone oxidoreductase that uses light energy to abstract electrons from H(2)O, generating O(2) and a proton gradient subsequently used for ATP formation. It consists of a core antenna complex that captures photons, and an electron transfer chain that converts photonic excitation into a charge separation. The polypeptide is Photosystem II reaction center protein K (Morus indica (Mulberry)).